We begin with the raw amino-acid sequence, 136 residues long: 5-hydroxyisourate hydrolase (136 aa).

Positions 1-20 (MKRYILATVIASLVAAPAMA) are cleaved as a signal peptide. Histidine 31, arginine 69, and tyrosine 133 together coordinate substrate.

It belongs to the transthyretin family. 5-hydroxyisourate hydrolase subfamily. Homotetramer.

It localises to the periplasm. It carries out the reaction 5-hydroxyisourate + H2O = 5-hydroxy-2-oxo-4-ureido-2,5-dihydro-1H-imidazole-5-carboxylate + H(+). In terms of biological role, catalyzes the hydrolysis of 5-hydroxyisourate (HIU) to 2-oxo-4-hydroxy-4-carboxy-5-ureidoimidazoline (OHCU). The sequence is that of 5-hydroxyisourate hydrolase (hiuH) from Salmonella typhimurium (strain LT2 / SGSC1412 / ATCC 700720).